We begin with the raw amino-acid sequence, 477 residues long: V-type proton ATPase subunit B (477 aa).

Arginine 365 contacts ATP.

Belongs to the ATPase alpha/beta chains family. As to quaternary structure, V-ATPase is a heteromultimeric enzyme composed of a peripheral catalytic V1 complex (components A to H) attached to an integral membrane V0 proton pore complex (components: a, c, c', c'', d, e, f and VOA1).

It is found in the vacuole membrane. Functionally, non-catalytic subunit of the V1 complex of vacuolar(H+)-ATPase (V-ATPase), a multisubunit enzyme composed of a peripheral complex (V1) that hydrolyzes ATP and a membrane integral complex (V0) that translocates protons. V-ATPase is responsible for acidifying and maintaining the pH of intracellular compartments. This is V-type proton ATPase subunit B from Encephalitozoon cuniculi (strain GB-M1) (Microsporidian parasite).